Reading from the N-terminus, the 515-residue chain is Interferon alpha/beta receptor 2 (515 aa).

The first 26 residues, 1-26 (MLLSQNAFIFRSLNLVLMVYISLVFG), serve as a signal peptide directing secretion. Over 27–243 (ISYDSPDYTD…QESESAESAK (217 aa)) the chain is Extracellular. 2 disulfide bridges follow: Cys-39–Cys-122 and Cys-85–Cys-93. 5 N-linked (GlcNAc...) asparagine glycosylation sites follow: Asn-58, Asn-87, Asn-116, Asn-188, and Asn-192. Cys-207 and Cys-227 are disulfide-bonded. Residues 244–264 (IGGIITVFLIALVLTSTIVTL) form a helical membrane-spanning segment. The Cytoplasmic segment spans residues 265–515 (KWIGYICLRN…VDLGDGYIMR (251 aa)). Disordered stretches follow at residues 318–418 (YDDE…EGSG) and 455–515 (EMVD…YIMR). Tyr-337 carries the post-translational modification Phosphotyrosine. Residues 362 to 375 (PESEEEPDLPEVDV) are compositionally biased toward acidic residues. Position 400 is a phosphoserine (Ser-400). The interval 418-444 (GGRITFNVDLNSVFLRVLDDEDSDDLE) is mediates interaction with STAT2 (and required for the recruitment of USP18). Residues 464–488 (NVQSNHLLASGEGTQPTFPSPSSEG) are compositionally biased toward polar residues. The residue at position 467 (Ser-467) is a Phosphoserine. A Phosphotyrosine modification is found at Tyr-512.

Belongs to the type II cytokine receptor family. As to quaternary structure, heterodimer with IFNAR1; forming the receptor for type I interferon. Interacts with JAK1. Interacts with the transcriptional factors STAT1 and STAT2. Interacts with USP18; indirectly via STAT2, it negatively regulates the assembly of the ternary interferon-IFNAR1-IFNAR2 complex and therefore type I interferon signaling. Post-translationally, phosphorylated on tyrosine residues upon interferon binding. Phosphorylation at Tyr-337 or Tyr-512 are sufficient to mediate interferon dependent activation of STAT1, STAT2 and STAT3 leading to antiproliferative effects on many different cell types. In terms of processing, glycosylated. Isoform 3 is detected in the urine (at protein level). Expressed in blood cells. Expressed in lymphoblastoid and fibrosarcoma cell lines.

Its subcellular location is the cell membrane. It is found in the secreted. Together with IFNAR1, forms the heterodimeric receptor for type I interferons (including interferons alpha, beta, epsilon, omega and kappa). Type I interferon binding activates the JAK-STAT signaling cascade, resulting in transcriptional activation or repression of interferon-regulated genes that encode the effectors of the interferon response. Mechanistically, type I interferon-binding brings the IFNAR1 and IFNAR2 subunits into close proximity with one another, driving their associated Janus kinases (JAKs) (TYK2 bound to IFNAR1 and JAK1 bound to IFNAR2) to cross-phosphorylate one another. The activated kinases phosphorylate specific tyrosine residues on the intracellular domains of IFNAR1 and IFNAR2, forming docking sites for the STAT transcription factors (STAT1, STAT2 and STAT). STAT proteins are then phosphorylated by the JAKs, promoting their translocation into the nucleus to regulate expression of interferon-regulated genes. Functionally, potent inhibitor of type I IFN receptor activity. In Homo sapiens (Human), this protein is Interferon alpha/beta receptor 2 (IFNAR2).